An 806-amino-acid polypeptide reads, in one-letter code: Transitional endoplasmic reticulum ATPase (806 aa).

Alanine 2 bears the N-acetylalanine mark. Phosphoserine is present on residues serine 3 and serine 7. Lysine 8 is covalently cross-linked (Glycyl lysine isopeptide (Lys-Gly) (interchain with G-Cter in SUMO2)). Residue serine 13 is modified to Phosphoserine. A Glycyl lysine isopeptide (Lys-Gly) (interchain with G-Cter in SUMO2) cross-link involves residue lysine 18. A Phosphoserine modification is found at serine 37. Residue proline 247–leucine 253 participates in ATP binding. Lysine 315 is subject to N6,N6,N6-trimethyllysine; by VCPKMT. Residues asparagine 348 and histidine 384 each coordinate ATP. Threonine 436 is subject to Phosphothreonine. Serine 462 is subject to Phosphoserine. Residues lysine 502 and lysine 505 each carry the N6-acetyllysine modification. Glycine 521 to leucine 526 is a binding site for ATP. Lysine 668 bears the N6-acetyllysine; alternate mark. Residue lysine 668 is modified to N6-succinyllysine; alternate. The residue at position 702 (serine 702) is a Phosphoserine. Residues arginine 708 to proline 727 form a disordered region. Lysine 754 carries the post-translational modification N6-acetyllysine. A disordered region spans residues phenylalanine 768–glycine 806. A phosphoserine mark is found at serine 770, serine 775, and serine 787. The span at asparagine 777–glycine 793 shows a compositional bias: gly residues. Residues threonine 797–glycine 806 are interaction with UBXN6. At tyrosine 805 the chain carries Phosphotyrosine.

The protein belongs to the AAA ATPase family. Homohexamer. Forms a ring-shaped particle of 12.5 nm diameter, that displays 6-fold radial symmetry. Part of a ternary complex containing STX5A, NSFL1C and VCP. NSFL1C forms a homotrimer that binds to one end of a VCP homohexamer. The complex binds to membranes enriched in phosphatidylethanolamine-containing lipids and promotes Golgi membrane fusion. Binds to a heterodimer of NPLOC4 and UFD1, binding to this heterodimer inhibits Golgi-membrane fusion. Interaction with VCIP135 leads to dissociation of the complex via ATP hydrolysis by VCP. Part of a ternary complex containing NPLOC4, UFD1 and VCP. Interacts with NSFL1C-like protein p37; the complex has membrane fusion activity and is required for Golgi and endoplasmic reticulum biogenesis. Interacts with SELENOS and SYVN1, as well as with DERL1 (via SHP-box motif), DERL2 and DERL3; which probably transfer misfolded proteins from the ER to VCP. Interacts with SVIP and DERL1. Component of a complex required to couple retrotranslocation, ubiquitination and deglycosylation composed of NGLY1, SAKS1, AMFR, VCP and RAD23B. Part of a complex composed of STUB1/CHIP, VCP/p97, CHRNA3, and UBXN2A that modulates the ubiquitination and endoplasmic reticulum-associated degradation (ERAD) of CHRNA3. Within the complex UBXN2A acts as a scaffold protein required for the interaction of CHRNA3 with VCP/p97, this interaction also inhibits CHRNA3 ubiquitination by STUB1/CHIP and subsequently ERAD. Interacts with UBXN2A (via UBX domain); the interaction is required for the interaction of CHRNA3 in the STUB1-VCP-UBXN2A complex. Directly interacts with UBXN4 and RNF19A. Interacts with CASR. Interacts with UBE4B and YOD1. Interacts with clathrin. Interacts with RNF103. Interacts with TRIM13 and TRIM21. Component of a VCP/p97-AMFR/gp78 complex that participates in the final step of the endoplasmic reticulum-associated degradation (ERAD) of HMGCR. Interacts directly with AMFR/gp78 (via its VIM). Interacts with RHBDD1 (via C-terminal domain). Interacts with SPRTN; leading to recruitment to stalled replication forks. Interacts with WASHC5. Interacts with UBOX5. Interacts (via N-terminus) with UBXN7, UBXN8, and probably several other UBX domain-containing proteins (via UBX domains); the interactions are mutually exclusive with VIM-dependent interactions such as those with AMFR and SELENOS. Forms a complex with UBQLN1 and UBXN4. Interacts (via the PIM motif) with RNF31 (via the PUB domain). Interacts with RIGI and RNF125; interaction takes place when RIGI is ubiquitinated via 'Lys-63'-linked ubiquitin on its CARD domains, leading to recruit RNF125 and promote ubiquitination and degradation of RIGI. Interacts with BAG6. Interacts with UBXN10. Interacts with UBXN6; the interaction with UBXN6 is direct and competitive with UFD1. Forms a ternary complex with CAV1 and UBXN6. Interacts with PLAA, UBXN6 and YOD1; may form a complex involved in macroautophagy. Interacts with ANKZF1. Interacts with ubiquitin-binding protein FAF1. Interacts with ZFAND2B (via VIM motif); the interaction is direct. Interacts with ZFAND1 (via its ubiquitin-like region); this interaction occurs in an arsenite-dependent manner. Interacts with CCDC47. Interacts with LMBR1L and UBAC2. Interacts with ATXN3. Interacts with TEX264; bridging VCP to covalent DNA-protein cross-links (DPCs). Requires Mg(2+) as cofactor. In terms of processing, ISGylated. Methylation at Lys-315 catalyzed by VCPKMT is increased in the presence of ASPSCR1. Lys-315 methylation may decrease ATPase activity. Post-translationally, phosphorylated by tyrosine kinases in response to T-cell antigen receptor activation. Phosphorylated in mitotic cells.

It is found in the cytoplasm. It localises to the cytosol. Its subcellular location is the endoplasmic reticulum. The protein resides in the nucleus. The protein localises to the stress granule. The catalysed reaction is ATP + H2O = ADP + phosphate + H(+). Functionally, necessary for the fragmentation of Golgi stacks during mitosis and for their reassembly after mitosis. Involved in the formation of the transitional endoplasmic reticulum (tER). The transfer of membranes from the endoplasmic reticulum to the Golgi apparatus occurs via 50-70 nm transition vesicles which derive from part-rough, part-smooth transitional elements of the endoplasmic reticulum (tER). Vesicle budding from the tER is an ATP-dependent process. The ternary complex containing UFD1, VCP and NPLOC4 binds ubiquitinated proteins and is necessary for the export of misfolded proteins from the ER to the cytoplasm, where they are degraded by the proteasome. The NPLOC4-UFD1-VCP complex regulates spindle disassembly at the end of mitosis and is necessary for the formation of a closed nuclear envelope. Regulates E3 ubiquitin-protein ligase activity of RNF19A. Component of the VCP/p97-AMFR/gp78 complex that participates in the final step of the sterol-mediated ubiquitination and endoplasmic reticulum-associated degradation (ERAD) of HMGCR. Mediates the endoplasmic reticulum-associated degradation of CHRNA3 in cortical neurons as part of the STUB1-VCP-UBXN2A complex. Involved in endoplasmic reticulum stress-induced pre-emptive quality control, a mechanism that selectively attenuates the translocation of newly synthesized proteins into the endoplasmic reticulum and reroutes them to the cytosol for proteasomal degradation. Involved in clearance process by mediating G3BP1 extraction from stress granules. Also involved in DNA damage response: recruited to double-strand breaks (DSBs) sites in a RNF8- and RNF168-dependent manner and promotes the recruitment of TP53BP1 at DNA damage sites. Recruited to stalled replication forks by SPRTN: may act by mediating extraction of DNA polymerase eta (POLH) to prevent excessive translesion DNA synthesis and limit the incidence of mutations induced by DNA damage. Together with SPRTN metalloprotease, involved in the repair of covalent DNA-protein cross-links (DPCs) during DNA synthesis. Involved in interstrand cross-link repair in response to replication stress by mediating unloading of the ubiquitinated CMG helicase complex. Mediates extraction of PARP1 trapped to chromatin: recognizes and binds ubiquitinated PARP1 and promotes its removal. Required for cytoplasmic retrotranslocation of stressed/damaged mitochondrial outer-membrane proteins and their subsequent proteasomal degradation. Essential for the maturation of ubiquitin-containing autophagosomes and the clearance of ubiquitinated protein by autophagy. Acts as a negative regulator of type I interferon production by interacting with RIGI: interaction takes place when RIGI is ubiquitinated via 'Lys-63'-linked ubiquitin on its CARD domains, leading to recruit RNF125 and promote ubiquitination and degradation of RIGI. May play a role in the ubiquitin-dependent sorting of membrane proteins to lysosomes where they undergo degradation. May more particularly play a role in caveolins sorting in cells. By controlling the steady-state expression of the IGF1R receptor, indirectly regulates the insulin-like growth factor receptor signaling pathway. The sequence is that of Transitional endoplasmic reticulum ATPase (VCP) from Sus scrofa (Pig).